We begin with the raw amino-acid sequence, 285 residues long: 2-methoxy-6-polyprenyl-1,4-benzoquinol methylase, mitochondrial (285 aa).

Residues 1–30 (MKGATNLFKSMRKPTNVGNFRQFSVNQVNS) constitute a mitochondrion transit peptide. S-adenosyl-L-methionine contacts are provided by residues Thr-106, Asp-126, 156-157 (NA), and Ser-173.

Belongs to the class I-like SAM-binding methyltransferase superfamily. MenG/UbiE family. Component of a multi-subunit COQ enzyme complex.

It is found in the mitochondrion inner membrane. It catalyses the reaction a 2-methoxy-6-(all-trans-polyprenyl)benzene-1,4-diol + S-adenosyl-L-methionine = a 5-methoxy-2-methyl-3-(all-trans-polyprenyl)benzene-1,4-diol + S-adenosyl-L-homocysteine + H(+). It participates in cofactor biosynthesis; ubiquinone biosynthesis. Functionally, methyltransferase required for the conversion of 2-polyprenyl-6-methoxy-1,4-benzoquinol (DDMQH2) to 2-polyprenyl-3-methyl-6-methoxy-1,4-benzoquinol (DMQH2). The protein is 2-methoxy-6-polyprenyl-1,4-benzoquinol methylase, mitochondrial of Caenorhabditis elegans.